We begin with the raw amino-acid sequence, 333 residues long: Phosphate acyltransferase (333 aa).

Belongs to the PlsX family. In terms of assembly, homodimer. Probably interacts with PlsY.

The protein localises to the cytoplasm. The enzyme catalyses a fatty acyl-[ACP] + phosphate = an acyl phosphate + holo-[ACP]. It functions in the pathway lipid metabolism; phospholipid metabolism. Catalyzes the reversible formation of acyl-phosphate (acyl-PO(4)) from acyl-[acyl-carrier-protein] (acyl-ACP). This enzyme utilizes acyl-ACP as fatty acyl donor, but not acyl-CoA. This Thermoanaerobacterium thermosaccharolyticum (strain ATCC 7956 / DSM 571 / NCIMB 9385 / NCA 3814 / NCTC 13789 / WDCM 00135 / 2032) (Clostridium thermosaccharolyticum) protein is Phosphate acyltransferase.